Here is a 371-residue protein sequence, read N- to C-terminus: Cytochrome b (371 aa).

A run of 4 helical transmembrane segments spans residues 25–45 (FGSM…FLSM), 69–90 (WMMQ…YMHI), 105–125 (WLSG…GYVL), and 170–190 (FFAL…VHIM). Heme b-binding residues include His-75 and His-89. His-174 and His-188 together coordinate heme b. Position 193 (His-193) interacts with a ubiquinone. A run of 4 helical transmembrane segments spans residues 218–238 (YKDL…VSFF), 280–300 (LGGA…PFTH), 312–332 (LMQF…WTAT), and 339–358 (FTTI…MSNP).

Belongs to the cytochrome b family. The cytochrome bc1 complex contains 3 respiratory subunits (MT-CYB, CYC1 and UQCRFS1), 2 core proteins (UQCRC1 and UQCRC2) and probably 6 low-molecular weight proteins. Heme b serves as cofactor.

The protein resides in the mitochondrion inner membrane. Its function is as follows. Component of the ubiquinol-cytochrome c reductase complex (complex III or cytochrome b-c1 complex) that is part of the mitochondrial respiratory chain. The b-c1 complex mediates electron transfer from ubiquinol to cytochrome c. Contributes to the generation of a proton gradient across the mitochondrial membrane that is then used for ATP synthesis. The protein is Cytochrome b (MT-CYB) of Candoia carinata (Papuan tree boa).